Reading from the N-terminus, the 4118-residue chain is BEACH domain-containing protein lvsB (4118 aa).

Positions 1–35 (MNRNFNNINNNNNNNNNYHGYQYHQQQQQQNQQQQ) are disordered. The helical transmembrane segment at 198-218 (GIPLSFLNFLITILLRILSLP) threads the bilayer. Low complexity predominate over residues 236–257 (NFSGNNNNNFNNNNHYFNNNHN). 3 disordered regions span residues 236 to 267 (NFSGNNNNNFNNNNHYFNNNHNNHNHHYQHHQ), 332 to 382 (PLSS…SKNN), and 621 to 644 (ISSSDNNNNNNNNSDGVNDDKNNN). Positions 258-267 (NHNHHYQHHQ) are enriched in basic residues. Low complexity-rich tracts occupy residues 332–381 (PLSS…NSKN) and 621–636 (ISSSDNNNNNNNNSDG). The chain crosses the membrane as a helical span at residues 827 to 847 (YLVLYMIVTEILSLLLELLVP). Low complexity predominate over residues 1155–1170 (NGGSISPSSIINNMNS). 11 disordered regions span residues 1155 to 1213 (NGGS…FNNN), 1599 to 1622 (ANTTTNSTTASTTTTTTNSTTAVS), 1643 to 1681 (NSGISRENSLGGRDSIGSNSSSSSSSSNSGVSSGSSTNL), 1928 to 1968 (GNFL…ISSS), 2015 to 2044 (STNNNSNNSNNSNSNNNNNNNNTNYNSNSL), 2537 to 2574 (RRGSSSSSTNSTTNNNNNNSSTTTTSNNNNNNNENNNE), 2702 to 2741 (FSPSRSKEKEKEKEKEKEKEKEKEKERERERETTNVTSDS), 2754 to 2791 (DQSNEESSTTDSDSTSDNNNNNNRNSYSGRNIRGNGIN), 2902 to 3007 (NTNS…NSNE), 3245 to 3265 (PLIPDLSTPSTPPSPQNTKDQ), and 3348 to 3418 (KTTA…NIVK). Low complexity-rich tracts occupy residues 1657-1678 (SIGSNSSSSSSSSNSGVSSGSS) and 1935-1968 (SSSNNNLRERSINNNNNNNNNSNNNNNNNSISSS). Residues 2540–2571 (SSSSSTNSTTNNNNNNSSTTTTSNNNNNNNEN) are compositionally biased toward low complexity. A coiled-coil region spans residues 2705–2738 (SRSKEKEKEKEKEKEKEKEKEKERERERETTNVT). Residues 2706 to 2734 (RSKEKEKEKEKEKEKEKEKEKERERERET) show a composition bias toward basic and acidic residues. 2 stretches are compositionally biased toward low complexity: residues 2758-2791 (EESSTTDSDSTSDNNNNNNRNSYSGRNIRGNGIN) and 2902-2947 (NTNS…NSTN). Residues 2948–2962 (QTITDTTLSPASSNV) show a composition bias toward polar residues. Low complexity-rich tracts occupy residues 2963 to 2980 (SISNQSTPISNNNNNNNS) and 2988 to 3006 (SNINIPPTINISDSNSNSN). The BEACH-type PH domain occupies 3303–3479 (KLGEKVNEVF…DRDIVYDLIM (177 aa)). Residues 3357–3411 (SNNNNNNNNNNNNNNNNNNNNSNDTTSSINSTTATNTNTTNTTTTNTTTTTTTTN) show a composition bias toward low complexity. Residues 3491–3782 (AEVHGNILKM…QIFTKPHPKK (292 aa)) enclose the BEACH domain. 5 WD repeats span residues 3868 to 3907 (VLNDDIICGDITKNGRLFVTGGTAGTVKVWKRCNNDGTIM), 3924 to 3963 (GHTNSILCVTVSQEYSIIVSGSKDSNCIIWDLNRLTYINS), 3984 to 4027 (TFET…LAKQ), 4029 to 4073 (FVND…KIRT), and 4075 to 4114 (VSKSTITALAVSKDNTQLISGDINGLIECLSSRSFDGYSS).

The protein localises to the membrane. It is found in the lysosome. The protein resides in the endosome. Involved in negative regulation of lysosome biogenesis, by limiting the heterotypic fusion of early endosomes and postlysosomal compartments. This is BEACH domain-containing protein lvsB (lvsB) from Dictyostelium discoideum (Social amoeba).